Consider the following 104-residue polypeptide: N(4)-acetylcytidine amidohydrolase (104 aa).

The ASCH domain occupies 6–102 (TFYTRFQQDI…ELYVIAFKKV (97 aa)). The Proton acceptor role is filled by K20. T23 serves as the catalytic Nucleophile. Catalysis depends on E73, which acts as the Proton donor.

Belongs to the N(4)-acetylcytidine amidohydrolase family.

It catalyses the reaction N(4)-acetylcytidine + H2O = cytidine + acetate + H(+). It carries out the reaction N(4)-acetyl-2'-deoxycytidine + H2O = 2'-deoxycytidine + acetate + H(+). The catalysed reaction is N(4)-acetylcytosine + H2O = cytosine + acetate + H(+). Catalyzes the hydrolysis of N(4)-acetylcytidine (ac4C). This is N(4)-acetylcytidine amidohydrolase from Cronobacter sakazakii (strain ATCC BAA-894) (Enterobacter sakazakii).